Reading from the N-terminus, the 468-residue chain is Protein maelstrom 2 (468 aa).

Residues 2-69 (PPKKHSGFMM…LTRVKKERLN (68 aa)) constitute a DNA-binding region (HMG box). Residues 374–393 (KEDSPTVLSPASSRRSLASS) form a disordered region. Low complexity predominate over residues 381 to 393 (LSPASSRRSLASS).

The protein belongs to the maelstrom family.

The protein resides in the cytoplasm. The protein localises to the nucleus. Involved both in the piRNA and miRNA metabolic processes. As a component of the meiotic nuage, plays a central role during oogenesis by repressing transposable elements and preventing their mobilization, which is essential for the germline integrity. Repression of transposable elements is mediated via the piRNA metabolic process, which mediates the repression of transposable elements during meiosis by forming complexes composed of piRNAs and Piwi proteins and governs the repression of transposons. As a nuclear component, it is required for proper differentiation in the germline stem cell (GSC) lineage by repressing microRNA-7 (miR-7), thereby acting as an indirect regulator of bag-of-marbles (Bam). Acts by binding to the promoter of miR-7 gene and repressing its expression; miR-7 repression alleviates the Bam repression by miR-7, thereby allowing differentiation in the germline stem cell (GSC) lineage. This Drosophila ananassae (Fruit fly) protein is Protein maelstrom 2 (mael2).